We begin with the raw amino-acid sequence, 343 residues long: Low conductance mechanosensitive channel YnaI (343 aa).

Residues 1-9 lie on the Periplasmic side of the membrane; sequence MIAELFTNN. The helical transmembrane segment at 10 to 30 threads the bilayer; it reads ALNLVIIFGSCAALILMSFWF. The Cytoplasmic segment spans residues 31–40; the sequence is RRGNRKRKGF. The chain crosses the membrane as a helical span at residues 41-61; it reads LFHAVQFLIYTIIISAVGSII. The Periplasmic portion of the chain corresponds to 62-77; it reads NYVIENYKLKFITPGV. The helical transmembrane segment at 78 to 98 threads the bilayer; it reads IDFICTSLIAVILTIKLFLLI. The Cytoplasmic segment spans residues 99–125; that stretch reads NQFEKQQIKKGRDITSARIMSRIIKIT. A helical transmembrane segment spans residues 126-146; it reads IIVVLVLLYGEHFGMSLSGLL. Position 147 (T147) is a topological domain, periplasmic. A helical membrane pass occupies residues 148-168; the sequence is FGGIGGLAVGMAGKDILSNFF. Over 169–343 the chain is Cytoplasmic; that stretch reads SGIMLYFDRP…DNITPPEQGR (175 aa).

The protein belongs to the MscS (TC 1.A.23) family. In terms of assembly, homoheptamer.

It localises to the cell inner membrane. Its function is as follows. Mechanosensitive channel that protects cells against hypoosmotic stress when highly overexpressed. In Escherichia coli (strain K12), this protein is Low conductance mechanosensitive channel YnaI (ynaI).